A 905-amino-acid polypeptide reads, in one-letter code: Isoleucine--tRNA ligase (905 aa).

A 'HIGH' region motif is present at residues 56–66 (PYANGNIHMGT). Glu-563 serves as a coordination point for L-isoleucyl-5'-AMP. Residues 604-608 (KMSKS) carry the 'KMSKS' region motif. Residue Lys-607 coordinates ATP.

This sequence belongs to the class-I aminoacyl-tRNA synthetase family. IleS type 1 subfamily. As to quaternary structure, monomer.

The protein resides in the cytoplasm. The catalysed reaction is tRNA(Ile) + L-isoleucine + ATP = L-isoleucyl-tRNA(Ile) + AMP + diphosphate. Functionally, catalyzes the attachment of isoleucine to tRNA(Ile). As IleRS can inadvertently accommodate and process structurally similar amino acids such as valine, to avoid such errors it has two additional distinct tRNA(Ile)-dependent editing activities. One activity is designated as 'pretransfer' editing and involves the hydrolysis of activated Val-AMP. The other activity is designated 'posttransfer' editing and involves deacylation of mischarged Val-tRNA(Ile). The sequence is that of Isoleucine--tRNA ligase from Pelagibacter ubique (strain HTCC1062).